A 183-amino-acid polypeptide reads, in one-letter code: UPF0316 protein BcerKBAB4_3093 (183 aa).

3 helical membrane passes run 6 to 26, 32 to 52, and 58 to 78; these read LIFV…ILLV, SAAG…GIVF, and WMNI…GGYI.

The protein belongs to the UPF0316 family.

The protein localises to the cell membrane. This is UPF0316 protein BcerKBAB4_3093 from Bacillus mycoides (strain KBAB4) (Bacillus weihenstephanensis).